Here is a 265-residue protein sequence, read N- to C-terminus: Expansin-like A2 (265 aa).

A signal peptide spans 1 to 21; the sequence is MLQGFLFLLSVVLLFSSSAAA. The 107-residue stretch at 42–148 folds into the Expansin-like EG45 domain; it reads SGACAYGSMA…RRVPCDYGNK (107 aa). Asn100 and Asn103 each carry an N-linked (GlcNAc...) asparagine glycan. Residues 162–244 form the Expansin-like CBD domain; the sequence is NYLAIKLLYQ…NWEAGKSYDA (83 aa).

It belongs to the expansin family. Expansin-like A subfamily.

It localises to the secreted. The polypeptide is Expansin-like A2 (EXLA2) (Arabidopsis thaliana (Mouse-ear cress)).